A 381-amino-acid polypeptide reads, in one-letter code: Queuine tRNA-ribosyltransferase (381 aa).

The Proton acceptor role is filled by D92. Residues 92 to 96 (DSGGF), D146, Q190, and G217 each bind substrate. The segment at 248–254 (GVGRPED) is RNA binding. D267 functions as the Nucleophile in the catalytic mechanism. The RNA binding; important for wobble base 34 recognition stretch occupies residues 272-276 (TRNAR). Residues C305, C307, C310, and H337 each coordinate Zn(2+).

The protein belongs to the queuine tRNA-ribosyltransferase family. Homodimer. Within each dimer, one monomer is responsible for RNA recognition and catalysis, while the other monomer binds to the replacement base PreQ1. The cofactor is Zn(2+).

The enzyme catalyses 7-aminomethyl-7-carbaguanine + guanosine(34) in tRNA = 7-aminomethyl-7-carbaguanosine(34) in tRNA + guanine. Its pathway is tRNA modification; tRNA-queuosine biosynthesis. Its function is as follows. Catalyzes the base-exchange of a guanine (G) residue with the queuine precursor 7-aminomethyl-7-deazaguanine (PreQ1) at position 34 (anticodon wobble position) in tRNAs with GU(N) anticodons (tRNA-Asp, -Asn, -His and -Tyr). Catalysis occurs through a double-displacement mechanism. The nucleophile active site attacks the C1' of nucleotide 34 to detach the guanine base from the RNA, forming a covalent enzyme-RNA intermediate. The proton acceptor active site deprotonates the incoming PreQ1, allowing a nucleophilic attack on the C1' of the ribose to form the product. After dissociation, two additional enzymatic reactions on the tRNA convert PreQ1 to queuine (Q), resulting in the hypermodified nucleoside queuosine (7-(((4,5-cis-dihydroxy-2-cyclopenten-1-yl)amino)methyl)-7-deazaguanosine). This is Queuine tRNA-ribosyltransferase from Xanthomonas oryzae pv. oryzae (strain MAFF 311018).